The sequence spans 439 residues: 3-phosphoshikimate 1-carboxyvinyltransferase (439 aa).

The 3-phosphoshikimate site is built by lysine 27, serine 28, and arginine 32. Lysine 27 contributes to the phosphoenolpyruvate binding site. Glycine 101 and arginine 130 together coordinate phosphoenolpyruvate. 4 residues coordinate 3-phosphoshikimate: serine 175, glutamine 177, aspartate 326, and lysine 353. A phosphoenolpyruvate-binding site is contributed by glutamine 177. Aspartate 326 serves as the catalytic Proton acceptor. Residues arginine 357 and arginine 399 each contribute to the phosphoenolpyruvate site.

The protein belongs to the EPSP synthase family. As to quaternary structure, monomer.

It is found in the cytoplasm. The enzyme catalyses 3-phosphoshikimate + phosphoenolpyruvate = 5-O-(1-carboxyvinyl)-3-phosphoshikimate + phosphate. It functions in the pathway metabolic intermediate biosynthesis; chorismate biosynthesis; chorismate from D-erythrose 4-phosphate and phosphoenolpyruvate: step 6/7. Functionally, catalyzes the transfer of the enolpyruvyl moiety of phosphoenolpyruvate (PEP) to the 5-hydroxyl of shikimate-3-phosphate (S3P) to produce enolpyruvyl shikimate-3-phosphate and inorganic phosphate. The protein is 3-phosphoshikimate 1-carboxyvinyltransferase of Synechococcus sp. (strain WH7803).